A 1158-amino-acid chain; its full sequence is Type IV pilus biogenesis factor PilY1 (1158 aa).

A signal peptide spans 1-29 (MIHQITRAGKSLLAAGCTLSILFASDSYA). 5 residues coordinate Ca(2+): Asp-841, Asn-843, Asp-845, Ile-847, and Asp-849.

The protein belongs to the PilY1 family.

The protein localises to the fimbrium. Its subcellular location is the membrane. It is found in the cytoplasm. It localises to the cytosol. Involved in pilus assembly, twitching motility and adhesion to host cells. Primes type IV pili (T4P) assembly and is required for inclusion of minor pilins PilV, PilW and PilX to the surface pili. Stabilizes assembled pilus fibers likely by antagonizing retraction mediated by PilT. Calcium-binding and calcium release by PilY1 seem to be essential for twitching motility and for regulation of pilus retraction dynamics of PilT. Regulates surface-activated virulence possibly by acting as a surface-attachment mechanosensor. The sequence is that of Type IV pilus biogenesis factor PilY1 from Pseudomonas aeruginosa (strain UCBPP-PA14).